Reading from the N-terminus, the 225-residue chain is Uridylate kinase (225 aa).

9–10 (GS) provides a ligand contact to ATP. Glycine 43 serves as a coordination point for UMP. ATP-binding residues include glycine 44 and arginine 48. Residues aspartate 65 and 113 to 119 (TEPAHST) each bind UMP. Threonine 139, tyrosine 145, and aspartate 148 together coordinate ATP.

The protein belongs to the UMP kinase family. As to quaternary structure, homohexamer.

The protein localises to the cytoplasm. The catalysed reaction is UMP + ATP = UDP + ADP. It functions in the pathway pyrimidine metabolism; CTP biosynthesis via de novo pathway; UDP from UMP (UMPK route): step 1/1. Inhibited by UTP. Functionally, catalyzes the reversible phosphorylation of UMP to UDP. The protein is Uridylate kinase of Methanobrevibacter smithii (strain ATCC 35061 / DSM 861 / OCM 144 / PS).